The sequence spans 148 residues: 3-hydroxyacyl-[acyl-carrier-protein] dehydratase FabZ (148 aa).

The active site involves His-48.

It belongs to the thioester dehydratase family. FabZ subfamily.

The protein resides in the cytoplasm. The enzyme catalyses a (3R)-hydroxyacyl-[ACP] = a (2E)-enoyl-[ACP] + H2O. Its function is as follows. Involved in unsaturated fatty acids biosynthesis. Catalyzes the dehydration of short chain beta-hydroxyacyl-ACPs and long chain saturated and unsaturated beta-hydroxyacyl-ACPs. The protein is 3-hydroxyacyl-[acyl-carrier-protein] dehydratase FabZ of Campylobacter curvus (strain 525.92).